The following is a 232-amino-acid chain: Orotidine 5'-phosphate decarboxylase (232 aa).

Residues Asp-13, Lys-35, 62–71, Thr-122, Arg-182, Gln-191, Gly-211, and Arg-212 each bind substrate; that span reads DLKFHDIPNT. Lys-64 functions as the Proton donor in the catalytic mechanism.

This sequence belongs to the OMP decarboxylase family. Type 1 subfamily. In terms of assembly, homodimer.

The enzyme catalyses orotidine 5'-phosphate + H(+) = UMP + CO2. It participates in pyrimidine metabolism; UMP biosynthesis via de novo pathway; UMP from orotate: step 2/2. Functionally, catalyzes the decarboxylation of orotidine 5'-monophosphate (OMP) to uridine 5'-monophosphate (UMP). The sequence is that of Orotidine 5'-phosphate decarboxylase from Pseudomonas syringae pv. tomato (strain ATCC BAA-871 / DC3000).